Reading from the N-terminus, the 398-residue chain is Trans-2-enoyl-CoA reductase [NADH] (398 aa).

NAD(+) is bound by residues 47–52 (GASSGF), 74–75 (FE), 111–112 (DA), and 139–140 (LA). Tyrosine 225 is a binding site for substrate. Tyrosine 235 acts as the Proton donor in catalysis. Residues lysine 244 and 274–276 (IVT) each bind NAD(+).

The protein belongs to the TER reductase family. Monomer.

The enzyme catalyses a 2,3-saturated acyl-CoA + NAD(+) = a (2E)-enoyl-CoA + NADH + H(+). The protein operates within lipid metabolism; fatty acid biosynthesis. In terms of biological role, involved in the fatty acid synthesis (FAS II). Catalyzes the reduction of a carbon-carbon double bond in an enoyl moiety that is covalently linked to a coenzyme A (CoA). The chain is Trans-2-enoyl-CoA reductase [NADH] from Clostridium beijerinckii (strain ATCC 51743 / NCIMB 8052) (Clostridium acetobutylicum).